We begin with the raw amino-acid sequence, 173 residues long: MMSRKKRRLWIVIACGIGLSTAVALMLFAFRSSLSFFMSPEQVAARHPPPGRVFRLGGIVQANTVVMGTRNGAPYTTFRITDGRASIPVVYTGVLPGLFRQGQGVVTIGAMAKGDSEFMASTVLAKHGADYMPRDVEMALRKAGKWNPKFGPPPNAGAWDDKSPAQIEASNNG.

Residues 1–8 (MMSRKKRR) lie on the Cytoplasmic side of the membrane. The chain crosses the membrane as a helical; Signal-anchor for type II membrane protein span at residues 9 to 29 (LWIVIACGIGLSTAVALMLFA). Over 30 to 173 (FRSSLSFFMS…PAQIEASNNG (144 aa)) the chain is Periplasmic. Positions 127 and 131 each coordinate heme. The segment at 145–173 (KWNPKFGPPPNAGAWDDKSPAQIEASNNG) is disordered.

It belongs to the CcmE/CycJ family.

The protein resides in the cell inner membrane. In terms of biological role, heme chaperone required for the biogenesis of c-type cytochromes. Transiently binds heme delivered by CcmC and transfers the heme to apo-cytochromes in a process facilitated by CcmF and CcmH. In Acidiphilium cryptum (strain JF-5), this protein is Cytochrome c-type biogenesis protein CcmE.